Reading from the N-terminus, the 1745-residue chain is Tight junction protein 1 (1745 aa).

Residues threonine 23–lysine 110 form the PDZ 1 domain. A compositionally biased stretch (basic residues) spans alanine 102–valine 112. Residues alanine 102–leucine 189 form a disordered region. The span at proline 123–valine 136 shows a compositional bias: acidic residues. Position 125 is a phosphoserine (serine 125). Tyrosine 132 bears the Phosphotyrosine mark. Over residues arginine 149–serine 175 the composition is skewed to basic and acidic residues. Phosphoserine occurs at positions 175, 178, and 179. Position 185 is a phosphothreonine (threonine 185). Residues lysine 186–glutamate 264 form the PDZ 2 domain. Serine 212 and serine 241 each carry phosphoserine. At threonine 267 the chain carries Phosphothreonine. 13 positions are modified to phosphoserine: serine 275, serine 277, serine 280, serine 284, serine 290, serine 294, serine 297, serine 300, serine 323, serine 329, serine 334, serine 337, and serine 353. The disordered stretch occupies residues alanine 296–proline 364. The segment covering histidine 299–proline 308 has biased composition (basic and acidic residues). Positions histidine 325 to leucine 338 are enriched in polar residues. Threonine 354 carries the phosphothreonine modification. A PDZ 3 domain is found at serine 421–lysine 502. Positions glycine 516–alanine 584 constitute an SH3 domain. Residues serine 610–glutamine 791 form the Guanylate kinase-like domain. Serine 617 and serine 622 each carry phosphoserine. The tract at residues tyrosine 633–arginine 876 is occludin (OCLN)-binding region. At threonine 809 the chain carries Phosphothreonine. Serine 810 and serine 821 each carry phosphoserine. Tyrosine 822 bears the Phosphotyrosine mark. Phosphoserine is present on residues serine 824, serine 828, and serine 837. Disordered regions lie at residues alanine 825–alanine 944 and leucine 956–glutamine 1042. Phosphothreonine occurs at positions 846, 848, 854, 861, and 868. Residues glutamate 879–asparagine 892 show a composition bias toward basic and acidic residues. The span at glutamine 893–alanine 906 shows a compositional bias: low complexity. Serine 912 is modified (phosphoserine). Over residues aspartate 998 to arginine 1014 the composition is skewed to basic and acidic residues. Serine 1071 is subject to Phosphoserine. Residues glutamine 1090–glycine 1586 form a disordered region. Residues glutamate 1106 to glutamate 1124 show a composition bias toward basic and acidic residues. Phosphoserine is present on serine 1138. 2 positions are modified to phosphotyrosine: tyrosine 1139 and tyrosine 1164. The segment at arginine 1150–proline 1370 is actin-binding region (ABR). Basic and acidic residues-rich tracts occupy residues lysine 1268–asparagine 1285 and proline 1335–aspartate 1346. The residue at position 1353 (tyrosine 1353) is a Phosphotyrosine. Serine 1365 bears the Phosphoserine mark. Residues serine 1388–serine 1399 are compositionally biased toward low complexity. The segment covering glycine 1401–aspartate 1418 has biased composition (basic and acidic residues). Serine 1411 carries the post-translational modification Phosphoserine. Residues serine 1431–leucine 1445 show a composition bias toward low complexity. Polar residues-rich tracts occupy residues glutamate 1455 to methionine 1468 and alanine 1510 to proline 1519. A compositionally biased stretch (basic and acidic residues) spans proline 1535–lysine 1544. At serine 1542 the chain carries Phosphoserine. The span at serine 1561–proline 1580 shows a compositional bias: polar residues. Residue serine 1614 is modified to Phosphoserine. Residues alanine 1631 to phenylalanine 1745 enclose the ZU5 domain.

The protein belongs to the MAGUK family. Homodimer. Forms heterodimers TJP3. Forms a heterodimer (via PDZ2 domain) with TJP2/ZO2 (via PDZ2 domain). Interacts with OCLN, CALM, claudins, CGN/cingulin, CXADR, GJD3 and UBN1. Interacts (via ZU5 domain) with CDC42BPB. Interacts (via PDZ domain) with GJA1. Interacts (via PDZ domains) with ANKRD2. Interacts with POPDC1 (via the C-terminus cytoplasmic tail). Interacts with GJA12 and KIRREL1. Interacts with HSPA4. Interacts (via ZU5 domain) with MYZAP. Interacts with DLL1. Interacts with USP53 (via the C-terminal region). Interacts with DNMBP (via C-terminal domain); required for the apical cell-cell junction localization of DNMBP. Interacts with SPEF1. Interacts (via N-terminus) with CTNNA1. Interacts with CLDN18. Interacts with CLDN16 (via TRV motif); this is a prerequisite for anchoring of CLDN16 at the tight junction. Interacts with PKP1; the interaction facilitates TJP1/ZO-1 localization to the plasma membrane. Interacts with PATJ (via PDZ1-6 domains); the interaction is required for attachment and extension of TJP1/ZO1 condensates along the apical cell interface. Post-translationally, phosphorylated at tyrosine redidues in response to epidermal growth factor (EGF). This response is dependent on an intact actin microfilament system. Dephosphorylated by PTPRJ. Expressed between ameloblasts, at ameloblast-ameloblast junctions and in the stratum intermedium during pre-secretory and secretory stages of tooth development (at protein level).

Its subcellular location is the cell membrane. The protein localises to the cell junction. The protein resides in the tight junction. It localises to the gap junction. It is found in the cytoplasm. Its subcellular location is the myofibril. The protein localises to the sarcomere. The protein resides in the i band. In terms of biological role, tjp1, TjpP2, and Tjp3 are closely related scaffolding proteins that link tight junction (TJ) transmembrane proteins such as claudins, junctional adhesion molecules, and occludin to the actin cytoskeleton. Forms a multistranded TJP1/ZO1 condensate which elongates to form a tight junction belt, the belt is anchored at the apical cell membrane via interaction with PATJ. The tight junction acts to limit movement of substances through the paracellular space and as a boundary between the compositionally distinct apical and basolateral plasma membrane domains of epithelial and endothelial cells. Necessary for lumenogenesis, and particularly efficient epithelial polarization and barrier formation. Plays a role in the regulation of cell migration by targeting Cdc42bpb to the leading edge of migrating cells. Plays an important role in podosome formation and associated function, thus regulating cell adhesion and matrix remodeling. With Tjp2 and TJjp3, participates in the junctional retention and stability of the transcription factor Dbpa, but is not involved in its shuttling to the nucleus. May play a role in mediating cell morphology changes during ameloblast differentiation via its role in tight junctions. This Mus musculus (Mouse) protein is Tight junction protein 1.